A 399-amino-acid chain; its full sequence is Glycerate 2-kinase (399 aa).

Lys-48 contributes to the substrate binding site.

The protein belongs to the glycerate kinase type-1 family. Homodimer. Mg(2+) is required as a cofactor. Ni(2+) serves as cofactor. Requires Mn(2+) as cofactor. The cofactor is Co(2+). It depends on Ca(2+) as a cofactor. Zn(2+) is required as a cofactor. Sr(2+) serves as cofactor.

It carries out the reaction (R)-glycerate + ATP = (2R)-2-phosphoglycerate + ADP + H(+). In terms of biological role, catalyzes the ATP-dependent phosphorylation of D-glycerate to 2-phosphoglycerate. It can also utilize GTP, CTP, UTP, ADP, AMP or pyrophosphate as phosphate donor. This is Glycerate 2-kinase (gck) from Sulfurisphaera tokodaii (strain DSM 16993 / JCM 10545 / NBRC 100140 / 7) (Sulfolobus tokodaii).